Consider the following 234-residue polypeptide: Small ribosomal subunit protein uS10m (234 aa).

A mitochondrion-targeting transit peptide spans 1-23; that stretch reads MLRIGYRGFSTRSRVFKLSPQEY.

It belongs to the universal ribosomal protein uS10 family. In terms of assembly, component of the mitochondrial small ribosomal subunit (mt-SSU).

It localises to the mitochondrion. In terms of biological role, component of the mitochondrial ribosome (mitoribosome), a dedicated translation machinery responsible for the synthesis of mitochondrial genome-encoded proteins, including at least some of the essential transmembrane subunits of the mitochondrial respiratory chain. The mitoribosomes are attached to the mitochondrial inner membrane and translation products are cotranslationally integrated into the membrane. The chain is Small ribosomal subunit protein uS10m (RSM10) from Candida albicans (strain SC5314 / ATCC MYA-2876) (Yeast).